The primary structure comprises 139 residues: Putative nickel-responsive regulator (139 aa).

Ni(2+) is bound by residues histidine 79, histidine 90, histidine 92, and cysteine 98.

Belongs to the transcriptional regulatory CopG/NikR family. It depends on Ni(2+) as a cofactor.

Its function is as follows. Transcriptional regulator. The protein is Putative nickel-responsive regulator of Lawsonia intracellularis (strain PHE/MN1-00).